Reading from the N-terminus, the 255-residue chain is DNA repair protein RecO (255 aa).

It belongs to the RecO family.

In terms of biological role, involved in DNA repair and RecF pathway recombination. This Listeria monocytogenes serotype 4b (strain CLIP80459) protein is DNA repair protein RecO.